A 189-amino-acid chain; its full sequence is Interleukin-23 subunit alpha (189 aa).

A signal peptide spans 1-19; sequence MLGSTAVMLLLLLPWTAQT.

It belongs to the IL-6 superfamily. In terms of assembly, heterodimer with IL12B; disulfide-linked. The heterodimer is known as interleukin IL-23. Interacts with IL23R; this interaction enables recruitment of IL12RB1.

The protein resides in the secreted. Associates with IL12B to form the pro-inflammatory cytokine IL-23 that plays different roles in innate and adaptive immunity. Released by antigen-presenting cells such as dendritic cells or macrophages, binds to a heterodimeric receptor complex composed of IL12RB1 and IL23R to activate JAK2 and TYK2 which then phosphorylate the receptor to form a docking site leading to the phosphorylation of STAT3 and STAT4. This process leads to activation of several pathways including p38 MAPK or NF-kappa-B and promotes the production of pro-inflammatory cytokines such as interleukin-17A/IL17A. In turn, participates in the early and effective intracellular bacterial clearance. Promotes the expansion and survival of T-helper 17 cells, a CD4-positive helper T-cell subset that produces IL-17, as well as other IL-17-producing cells. The polypeptide is Interleukin-23 subunit alpha (IL23A) (Cavia porcellus (Guinea pig)).